A 570-amino-acid chain; its full sequence is Phosphoglucomutase 1 (570 aa).

Ser-2 carries the N-acetylserine modification. Residues Arg-24 and Ser-120 each contribute to the alpha-D-glucose 1,6-bisphosphate site. Ser-120 functions as the Phosphoserine intermediate in the catalytic mechanism. Mg(2+) is bound by residues Ser-120, Asp-291, Asp-293, and Asp-295. Ser-120 carries the phosphoserine modification. Alpha-D-glucose 1,6-bisphosphate contacts are provided by Asp-295, Arg-296, Thr-360, Glu-379, Ser-381, and Lys-392.

This sequence belongs to the phosphohexose mutase family. In terms of assembly, monomer. The cofactor is Mg(2+).

It localises to the cytoplasm. The enzyme catalyses alpha-D-glucose 1-phosphate = alpha-D-glucose 6-phosphate. The catalysed reaction is O-phospho-L-seryl-[protein] + alpha-D-glucose 1-phosphate = alpha-D-glucose 1,6-bisphosphate + L-seryl-[protein]. It catalyses the reaction alpha-D-glucose 1,6-bisphosphate + L-seryl-[protein] = O-phospho-L-seryl-[protein] + alpha-D-glucose 6-phosphate. In terms of biological role, minor phosphoglucomutase isozyme that catalyzes the reversible interconversion of alpha-D-glucose 1-phosphate and alpha-D-glucose 6-phosphate. The mechanism proceeds via the intermediate compound alpha-D-glucose 1,6-bisphosphate. Constitutes about 10-20% of the phosphoglucomutase activity in the cell. Key enzyme in hexose metabolism. The forward reaction is an essential step in the energy metabolism of galactose since the product of the galactose pathway enzymes in yeast is glucose 1-phosphate. The reverse reaction is an essential step for biosynthesis when carbon sources other than galactose are the energy source because glucose 1-phosphate is the starting point for the synthesis of UDP-glucose, which acts as a precursor for the synthesis of oligosaccharides and trehalose. The chain is Phosphoglucomutase 1 from Saccharomyces cerevisiae (strain ATCC 204508 / S288c) (Baker's yeast).